Consider the following 229-residue polypeptide: Non-structural protein P8 (229 aa).

Residues 13–31 show a composition bias toward basic and acidic residues; the sequence is KMKHNQDRVEEPSQVRVDD. The interval 13 to 46 is disordered; that stretch reads KMKHNQDRVEEPSQVRVDDTISQPPRYAPSAPMP. Positions 36-46 are enriched in low complexity; the sequence is PPRYAPSAPMP. Helical transmembrane passes span 119 to 139 and 162 to 182; these read IIHT…VCTL and SLNP…MVCA.

The protein belongs to the orbivirus NS3 family. In terms of assembly, forms homooligomers via coiled-coil motif. Interacts with host OPTN; this interaction inhibits innate immune response.

It is found in the host cell membrane. It localises to the host Golgi apparatus. Functionally, plays a role in the inhibition of host innate immune response. Interacts with host OPTN and thus inhibits the recruitment of TBK1 to the host Golgi apparatus. In turn, downstream partner IRF3 cannot be activated and IFN-beta production is impaired. Facilitates viral particle release either by increasing plasma membrane permeability through a viroporin-like activity or by viral budding. This Antilocapra americana (Pronghorn) protein is Non-structural protein P8 (Segment-10).